A 326-amino-acid chain; its full sequence is uncharacterized protein (326 aa).

The tract at residues 293 to 326 (HRNYDANHSTSGEEENSGSRSRIAELSQSTIHRR) is disordered.

This is an uncharacterized protein from Oryza latifolia (Indian wild rice).